Here is a 160-residue protein sequence, read N- to C-terminus: Cytochrome b6-f complex subunit 4 (160 aa).

The next 3 helical transmembrane spans lie at leucine 36 to valine 56, leucine 95 to glutamate 115, and threonine 131 to isoleucine 151.

Belongs to the cytochrome b family. PetD subfamily. In terms of assembly, the 4 large subunits of the cytochrome b6-f complex are cytochrome b6, subunit IV (17 kDa polypeptide, petD), cytochrome f and the Rieske protein, while the 4 small subunits are petG, petL, petM and petN. The complex functions as a dimer.

The protein localises to the plastid. It is found in the chloroplast thylakoid membrane. Component of the cytochrome b6-f complex, which mediates electron transfer between photosystem II (PSII) and photosystem I (PSI), cyclic electron flow around PSI, and state transitions. The protein is Cytochrome b6-f complex subunit 4 of Chaetosphaeridium globosum (Charophycean green alga).